The following is a 445-amino-acid chain: FAS-associated factor 2-A (445 aa).

Residues 12 to 53 enclose the UBA domain; that stretch reads EQTEKLLQFQDLTGIESMDQCRQTLQQHNWNIEAAVQDRLNE. The stretch at 275-353 forms a coiled coil; the sequence is SERLEREERN…ERKSECLPAE (79 aa). Residues 302 to 354 are disordered; sequence RADQEKERKKKEKQEQKRREEEEAQRKQMLEERKKRNLEEEKERKSECLPAEP. The span at 303–348 shows a compositional bias: basic and acidic residues; that stretch reads ADQEKERKKKEKQEQKRREEEEAQRKQMLEERKKRNLEEEKERKSE. In terms of domain architecture, UBX spans 357–439; that stretch reads DHPDNVKIIF…GLSQSQLLFV (83 aa).

It is found in the cytoplasm. Its subcellular location is the lipid droplet. It localises to the endoplasmic reticulum. Its function is as follows. Plays an important role in endoplasmic reticulum-associated degradation (ERAD) that mediates ubiquitin-dependent degradation of misfolded endoplasmic reticulum proteins. Involved in inhibition of lipid droplet degradation. Involved in stress granule disassembly. This chain is FAS-associated factor 2-A (faf2-a), found in Xenopus laevis (African clawed frog).